The following is a 63-amino-acid chain: Large ribosomal subunit protein bL35 (63 aa).

The protein belongs to the bacterial ribosomal protein bL35 family.

The sequence is that of Large ribosomal subunit protein bL35 from Campylobacter curvus (strain 525.92).